The primary structure comprises 313 residues: Heterogeneous nuclear ribonucleoproteins C1/C2 (313 aa).

Position 2 is an N-acetylalanine (Ala-2). Residues Lys-8, Lys-50, Lys-89, and Lys-94 each participate in a glycyl lysine isopeptide (Lys-Gly) (interchain with G-Cter in SUMO2) cross-link. One can recognise an RRM domain in the interval 16–87; it reads SRVFIGNLNT…QVLDINLAAE (72 aa). A phosphoserine mark is found at Ser-113, Ser-115, and Ser-121. Disordered regions lie at residues 139 to 191 and 219 to 313; these read YPAR…KLKG and EKEQ…EDDS. A Nuclear localization signal motif is present at residues 155-161; the sequence is PSKRQRV. A phosphoserine mark is found at Ser-162 and Ser-166. The segment covering 175–186 has biased composition (low complexity); it reads SKSGQRGSSSKS. Lys-176 bears the N6-acetyllysine; alternate mark. A Glycyl lysine isopeptide (Lys-Gly) (interchain with G-Cter in SUMO2); alternate cross-link involves residue Lys-176. Positions 191–226 form a coiled coil; that stretch reads GDDLQAIKKELTQIKQKVDSLLESLEKIEKEQSKQA. Lys-224 is covalently cross-linked (Glycyl lysine isopeptide (Lys-Gly) (interchain with G-Cter in SUMO2)). Phosphoserine is present on residues Ser-229, Ser-231, and Ser-232. A Glycyl lysine isopeptide (Lys-Gly) (interchain with G-Cter in SUMO2) cross-link involves residue Lys-237. A Glycyl lysine isopeptide (Lys-Gly) (interchain with G-Cter in SUMO2); alternate cross-link involves residue Lys-240. Lys-240 is covalently cross-linked (Glycyl lysine isopeptide (Lys-Gly) (interchain with G-Cter in SUMO1); alternate). 4 positions are modified to phosphoserine: Ser-241, Ser-246, Ser-247, and Ser-249. Residues 250 to 261 are compositionally biased toward basic and acidic residues; the sequence is VKKDETNVKMES. Residues Lys-251 and Lys-252 each participate in a glycyl lysine isopeptide (Lys-Gly) (interchain with G-Cter in SUMO2) cross-link. A Glycyl lysine isopeptide (Lys-Gly) (interchain with G-Cter in SUMO2); alternate cross-link involves residue Lys-258. A Glycyl lysine isopeptide (Lys-Gly) (interchain with G-Cter in SUMO); alternate cross-link involves residue Lys-258. Phosphoserine occurs at positions 261 and 268. A compositionally biased stretch (acidic residues) spans 263 to 284; that stretch reads AGADDSAEEGDLLDDDDNEDRG. Residues 285-294 show a composition bias toward basic and acidic residues; sequence DDQLELKDDE. The span at 295–313 shows a compositional bias: acidic residues; sequence KEPEEGEDDRDSANGEDDS. Phosphoserine occurs at positions 306 and 313.

It belongs to the RRM HNRPC family. RALY subfamily. Tetramer composed of 3 copies of isoform C1 and 1 copy of isoform C2. Assembly of 3 tetramers with bound pre-mRNA gives rise to a 19S complex that interacts with HNRNPA2B1 tetramers. Component of the 40S hnRNP particle. Identified in the spliceosome C complex. Interacts with IGF2BP1. Interacts with DHX9; this interaction is direct, enhanced probably by their concomitant binding to RNA and mediates the attachment to actin filaments. Interacts with PPIA/CYPA. Phosphorylated on Ser-268 and Ser-306 in resting cells. In terms of processing, sumoylated. Sumoylation reduces affinity for mRNA. Post-translationally, ubiquitinated and degraded after nucleo-cytoplasmic transport by YWHAE.

The protein resides in the nucleus. Its function is as follows. Binds pre-mRNA and nucleates the assembly of 40S hnRNP particles. Interacts with poly-U tracts in the 3'-UTR or 5'-UTR of mRNA and modulates the stability and the level of translation of bound mRNA molecules. Single HNRNPC tetramers bind 230-240 nucleotides. Trimers of HNRNPC tetramers bind 700 nucleotides. May play a role in the early steps of spliceosome assembly and pre-mRNA splicing. N6-methyladenosine (m6A) has been shown to alter the local structure in mRNAs and long non-coding RNAs (lncRNAs) via a mechanism named 'm(6)A-switch', facilitating binding of HNRNPC, leading to regulation of mRNA splicing. The protein is Heterogeneous nuclear ribonucleoproteins C1/C2 (Hnrnpc) of Mus musculus (Mouse).